The chain runs to 375 residues: N-acetylneuraminate epimerase (375 aa).

An N-terminal signal peptide occupies residues M1–A22. 7 Kelch repeats span residues T43 to D87, K89 to G140, K142 to A176, A177 to G222, L225 to A273, K295 to N344, and V346 to E375. E231 functions as the Proton acceptor in the catalytic mechanism.

Belongs to the NanM family. Homodimer.

Its subcellular location is the periplasm. It catalyses the reaction N-acetyl-alpha-neuraminate = N-acetyl-beta-neuraminate. Its function is as follows. Converts alpha-N-acetylneuranimic acid (Neu5Ac) to the beta-anomer, accelerating the equilibrium between the alpha- and beta-anomers. Probably facilitates sialidase-negative bacteria to compete successfully for limited amounts of extracellular Neu5Ac, which is likely taken up in the beta-anomer. In addition, the rapid removal of sialic acid from solution might be advantageous to the bacterium to damp down host responses. The polypeptide is N-acetylneuraminate epimerase (Haemophilus influenzae (strain PittEE)).